Consider the following 119-residue polypeptide: Large ribosomal subunit protein uL18 (119 aa).

It belongs to the universal ribosomal protein uL18 family. In terms of assembly, part of the 50S ribosomal subunit; part of the 5S rRNA/L5/L18/L25 subcomplex. Contacts the 5S and 23S rRNAs.

Its function is as follows. This is one of the proteins that bind and probably mediate the attachment of the 5S RNA into the large ribosomal subunit, where it forms part of the central protuberance. This chain is Large ribosomal subunit protein uL18, found in Clostridium botulinum (strain Okra / Type B1).